Reading from the N-terminus, the 125-residue chain is uncharacterized protein (125 aa).

Residues 7-29 traverse the membrane as a helical segment; sequence NCMFLYVYTDVCVRLCASIFYIM.

Its subcellular location is the membrane. This is an uncharacterized protein from Saccharomyces cerevisiae (strain ATCC 204508 / S288c) (Baker's yeast).